The following is a 164-amino-acid chain: MGGGGPRRPGTLPLLALLALLAAHGGAAPLQPGGSPALTKIYPRGSHWAVGHLMGKKSTGDFPYAYEEENKIPLSASPENIKQLDDYLQREEMSKHLLQLLEGNENKSAHFSKGGLPWHTRNSWETDDSSSWKDVSRTRCVSAFLTVTFCSKVAYQLCPTSALS.

Positions 1–27 are cleaved as a signal peptide; sequence MGGGGPRRPGTLPLLALLALLAAHGGA. Methionine 54 carries the post-translational modification Methionine amide. Residues 58-164 constitute a propeptide that is removed on maturation; it reads STGDFPYAYE…YQLCPTSALS (107 aa).

Belongs to the bombesin/neuromedin-B/ranatensin family.

The protein resides in the secreted. Its subcellular location is the cytoplasmic vesicle. It localises to the secretory vesicle lumen. Its function is as follows. Stimulates the release of gastrin and other gastrointestinal hormones. Stimulates pancreatic protein and fluid secretion, and increases acid secretion from the avian proventriculus. The sequence is that of Gastrin-releasing peptide (GRP) from Gallus gallus (Chicken).